The sequence spans 270 residues: MRIALGIQYDGAAFCGWQAQPHGKTVQDRLEHALAEFARVPLHTTVAGRTDTGVHGLGQVVHFDTDLEREVFSWVRGTNAFLPSTVSVQWAKPMPDTFHARFSAFERTYYYALYVHPVRSPMLAGRAGWIHTPLDDDAMRAAAAHLIGEHDFSSFRSSECQSKTPVKHLYQIDVRRAGHFIHFRFRANAFLHHMVRNLMGCLVAVGRGRYPADWLADVLAGRDRNLAAPTFMADGLYLAHVGYPAEFAVPPAQLGSVPWSSVWADLDPQT.

Asp51 functions as the Nucleophile in the catalytic mechanism. Residue Tyr109 coordinates substrate.

It belongs to the tRNA pseudouridine synthase TruA family. As to quaternary structure, homodimer.

It carries out the reaction uridine(38/39/40) in tRNA = pseudouridine(38/39/40) in tRNA. Functionally, formation of pseudouridine at positions 38, 39 and 40 in the anticodon stem and loop of transfer RNAs. The chain is tRNA pseudouridine synthase A from Burkholderia orbicola (strain MC0-3).